The chain runs to 145 residues: Flagellar assembly factor FliW (145 aa).

Belongs to the FliW family. In terms of assembly, interacts with translational regulator CsrA and flagellin(s).

It is found in the cytoplasm. Its function is as follows. Acts as an anti-CsrA protein, binds CsrA and prevents it from repressing translation of its target genes, one of which is flagellin. Binds to flagellin and participates in the assembly of the flagellum. This is Flagellar assembly factor FliW from Clostridium tetani (strain Massachusetts / E88).